The following is a 473-amino-acid chain: 3-isopropylmalate dehydratase large subunit (473 aa).

Positions 348, 413, and 416 each coordinate [4Fe-4S] cluster.

This sequence belongs to the aconitase/IPM isomerase family. LeuC type 1 subfamily. Heterodimer of LeuC and LeuD. [4Fe-4S] cluster is required as a cofactor.

It carries out the reaction (2R,3S)-3-isopropylmalate = (2S)-2-isopropylmalate. It participates in amino-acid biosynthesis; L-leucine biosynthesis; L-leucine from 3-methyl-2-oxobutanoate: step 2/4. In terms of biological role, catalyzes the isomerization between 2-isopropylmalate and 3-isopropylmalate, via the formation of 2-isopropylmaleate. This Parvibaculum lavamentivorans (strain DS-1 / DSM 13023 / NCIMB 13966) protein is 3-isopropylmalate dehydratase large subunit.